The primary structure comprises 124 residues: Large ribosomal subunit protein bL20 (124 aa).

Belongs to the bacterial ribosomal protein bL20 family.

Its function is as follows. Binds directly to 23S ribosomal RNA and is necessary for the in vitro assembly process of the 50S ribosomal subunit. It is not involved in the protein synthesizing functions of that subunit. In Gemmatimonas aurantiaca (strain DSM 14586 / JCM 11422 / NBRC 100505 / T-27), this protein is Large ribosomal subunit protein bL20.